Reading from the N-terminus, the 56-residue chain is Large ribosomal subunit protein bL32 (56 aa).

Basic residues predominate over residues 1-20 (MAVPKRRTSRSNTRSRRSQW). Residues 1-24 (MAVPKRRTSRSNTRSRRSQWKAKV) form a disordered region.

Belongs to the bacterial ribosomal protein bL32 family.

The sequence is that of Large ribosomal subunit protein bL32 from Frankia casuarinae (strain DSM 45818 / CECT 9043 / HFP020203 / CcI3).